The primary structure comprises 782 residues: Protein bicaudal D (782 aa).

Residues 15–77 (VQDLQMEVER…RHELDITQEA (63 aa)) are a coiled coil. Ser-103 is subject to Phosphoserine. A coiled-coil region spans residues 107 to 249 (ETSLNLQIFD…LETLQGEREA (143 aa)). 3 positions are modified to phosphoserine: Ser-285, Ser-288, and Ser-305. Residue Thr-306 is modified to Phosphothreonine. Ser-310 carries the post-translational modification Phosphoserine. Coiled-coil stretches lie at residues 320 to 368 (SEIH…FMSR) and 444 to 477 (TTTLRNEVTNLKNKLLATEQKSLDLQSDVQTLTH). A Phosphoserine modification is found at Ser-528. Coiled coils occupy residues 603–630 (EKVNTEEMEELQEQIVKLKSLLSVKREQ) and 695–743 (CEEY…MEMD). The interaction with Rab6 stretch occupies residues 699–722 (VTQVDDLNRQLEAAEEEKKTLNQL). The segment at 744-782 (REMRHVRRPMPAQRGTSGKSSFSTRPSSRNPASSNANPF) is disordered. Positions 757 to 767 (RGTSGKSSFST) are enriched in polar residues. Over residues 768–782 (RPSSRNPASSNANPF) the composition is skewed to low complexity.

Belongs to the BicD family. May homodimerize but does not interact with BicDR. Interacts (via C-terminal domain) with Rab6. In terms of tissue distribution, in ovaries, expressed in oocyte and nurse cells.

It localises to the cytoplasm. The protein localises to the cytoskeleton. In terms of biological role, this protein is essential for differentiation. It may play a role in localizing of Nanos (a maternal determinant) activity in oocytes. Functions redundantly with BicDR. During oogenesis, plays a specific role, together with Rab6 but independently of Sec5, in the polarization of the oocyte microtubule cytoskeleton, in oskar mRNA localization and in the anterodorsal secretion of grk. Plays a role in the biogenesis of annulate lamellae containing nuclear pore complex components. During macrochaetae development, together with BicDR, involved in Rab 6 and Spn-F stability and distribution and actin cytoskeleton organization. This is Protein bicaudal D from Drosophila melanogaster (Fruit fly).